A 273-amino-acid chain; its full sequence is Glutamate racemase (273 aa).

Residues D7–S8 and Y39–G40 contribute to the substrate site. The active-site Proton donor/acceptor is the C70. N71–T72 contributes to the substrate binding site. Residue C194 is the Proton donor/acceptor of the active site. T195–H196 serves as a coordination point for substrate.

The protein belongs to the aspartate/glutamate racemases family.

The enzyme catalyses L-glutamate = D-glutamate. Its pathway is cell wall biogenesis; peptidoglycan biosynthesis. Provides the (R)-glutamate required for cell wall biosynthesis. This chain is Glutamate racemase, found in Dinoroseobacter shibae (strain DSM 16493 / NCIMB 14021 / DFL 12).